We begin with the raw amino-acid sequence, 370 residues long: Probable neutral protease 2 homolog TRV_02539 (370 aa).

The signal sequence occupies residues 1–19; it reads MQLVAALAALGALVAPAVA. A propeptide spanning residues 20–188 is cleaved from the precursor; that stretch reads YPHAPMNETL…SIHSRALQKR (169 aa). Disulfide bonds link Cys-196–Cys-267 and Cys-274–Cys-292. Position 316 (His-316) interacts with Zn(2+). Glu-317 is an active-site residue. Zn(2+) contacts are provided by His-320 and Asp-331.

It belongs to the peptidase M35 family. Zn(2+) serves as cofactor.

The protein resides in the secreted. The catalysed reaction is Preferential cleavage of bonds with hydrophobic residues in P1'. Also 3-Asn-|-Gln-4 and 8-Gly-|-Ser-9 bonds in insulin B chain.. Functionally, probable secreted metalloprotease that shows high activities on basic nuclear substrates such as histone and protamine. May be involved in virulence. This chain is Probable neutral protease 2 homolog TRV_02539, found in Trichophyton verrucosum (strain HKI 0517).